A 338-amino-acid chain; its full sequence is Lipoate-protein ligase A (338 aa).

The 188-residue stretch at 29 to 216 (PATQRVLFLW…AFFAHYGERV (188 aa)) folds into the BPL/LPL catalytic domain. ATP contacts are provided by residues Arg-71, 76-79 (GAVF), and Lys-134. Lys-134 provides a ligand contact to (R)-lipoate.

The protein belongs to the LplA family. As to quaternary structure, monomer.

It localises to the cytoplasm. The catalysed reaction is L-lysyl-[lipoyl-carrier protein] + (R)-lipoate + ATP = N(6)-[(R)-lipoyl]-L-lysyl-[lipoyl-carrier protein] + AMP + diphosphate + H(+). The protein operates within protein modification; protein lipoylation via exogenous pathway; protein N(6)-(lipoyl)lysine from lipoate: step 1/2. It participates in protein modification; protein lipoylation via exogenous pathway; protein N(6)-(lipoyl)lysine from lipoate: step 2/2. In terms of biological role, catalyzes both the ATP-dependent activation of exogenously supplied lipoate to lipoyl-AMP and the transfer of the activated lipoyl onto the lipoyl domains of lipoate-dependent enzymes. This Shigella sonnei (strain Ss046) protein is Lipoate-protein ligase A.